A 201-amino-acid chain; its full sequence is Lipoprotein signal peptidase (201 aa).

Helical transmembrane passes span 33 to 53 (LLLS…VLAV), 86 to 106 (GYTW…FWMG), and 110 to 130 (VSSW…GNLV). Catalysis depends on residues aspartate 146 and aspartate 160. Residues 158–178 (VADPSVVVGAILLVVLSIFGF) form a helical membrane-spanning segment.

This sequence belongs to the peptidase A8 family.

It localises to the cell membrane. It carries out the reaction Release of signal peptides from bacterial membrane prolipoproteins. Hydrolyzes -Xaa-Yaa-Zaa-|-(S,diacylglyceryl)Cys-, in which Xaa is hydrophobic (preferably Leu), and Yaa (Ala or Ser) and Zaa (Gly or Ala) have small, neutral side chains.. It participates in protein modification; lipoprotein biosynthesis (signal peptide cleavage). This protein specifically catalyzes the removal of signal peptides from prolipoproteins. In Mycobacterium leprae (strain Br4923), this protein is Lipoprotein signal peptidase.